The chain runs to 765 residues: MPRRPPRVCSGNQPAPVPAMEPATDGLWAHSRAALARLEKLLRCSRCANILKEPVCLGGCEHIFCSGCISDCVGSGCPVCYTPAWILDLKINRQLDSMIQLSSKLQNLLHDNKDSKDNTSRASLFGDAERKKNSIKMWFSPRSKKVRYVVTKVSVQTQPQKAKDDKAQEASMYEFVSATPPVAVPKSAKTASRTSAKKHPKKSVAKINREENLRPETKDSRFDSKEELKEEKVVSCSQIPVMERPRVNGEIDLLASGSVVEPECSGSLTEVSLPLAEHIVSPDTVSKNEETPEKKVCVKDLRSGGSNGNRKGCHRPTTSTSDSCGSNIPSTSRGIGEPALLAENVVLVDCSSLPSGQLQVDVTLRRKSNASDDPLSLSPGTPPPLLNNSTHRQMMSSPSTVKLSSGMPARKRNHRGETLLHIASIKGDIPSVEYLLQNGNDPNVKDHAGWTPLHEACSHGHLKVVELLLQHNALVNTPGYQNDSPLHDAVKSGHIDIVKVLLSHGASRNAVNIFGVRPVDYTDNENIRSLLLLPEENESFSTSQCSIVNTGQRKNGPLVFIGSGLSSQQQKMLSKLETVLKAKKCMEFDSTVTHVIVPDEEAQSTLKCMLGILSGCWILKFDWVKACLDSKVREQEEKYEVPGGPQRSRLNREQLLPKLFDGCYFFLGGNFKHHPRDDLLKLIAAAGGKVLSRKPKPDSDVTQTINTVAYHAKPESDQRFCTQYIVYEDLFNCHPERVRQGKVWMAPSTWLISCIMAFELLPLDS.

The interval 20 to 113 (MEPATDGLWA…KLQNLLHDNK (94 aa)) is required for BRCA1 binding. An RING-type zinc finger spans residues 44–81 (CSRCANILKEPVCLGGCEHIFCSGCISDCVGSGCPVCY). A Glycyl lysine isopeptide (Lys-Gly) (interchain with G-Cter in SUMO2) cross-link involves residue lysine 152. Disordered regions lie at residues 183 to 229 (AVPK…EELK), 299 to 328 (KDLR…GSNI), and 369 to 410 (NASD…MPAR). A compositionally biased stretch (basic residues) spans 195-204 (SAKKHPKKSV). Residues 207 to 229 (INREENLRPETKDSRFDSKEELK) show a composition bias toward basic and acidic residues. A compositionally biased stretch (polar residues) spans 316–328 (PTTSTSDSCGSNI). Serine 378 is subject to Phosphoserine. Threonine 381 carries the phosphothreonine modification. Positions 391 to 403 (HRQMMSSPSTVKL) are enriched in polar residues. Lysine 411 is covalently cross-linked (Glycyl lysine isopeptide (Lys-Gly) (interchain with G-Cter in SUMO2)). 3 ANK repeats span residues 415–447 (RGET…VKDH), 448–480 (AGWT…TPGY), and 481–513 (QNDS…AVNI). Residues 514–534 (FGVRPVDYTDNENIRSLLLLP) form an ANK 4; degenerate repeat. Positions 542-546 (TSQCS) are flexible linker. BRCT domains are found at residues 549–641 (NTGQ…KYEV) and 655–765 (LLPK…PLDS).

In terms of assembly, homo- and heterodimer. Heterodimer (RING-type zinc finger) with BRCA1. Heterodimer (via ANK repeats and BRCT domains) with CSTF1/CSTF-50. Component of the BRCA1-A complex, at least composed of the BRCA1, BARD1, UIMC1/RAP80, ABRAXAS1, BRCC3/BRCC36, BABAM2 and BABAM1/NBA1. Interacts with UBXN1. Post-translationally, processed during apoptosis. The homodimer is more susceptible to proteolytic cleavage than the BARD1/BRCA1 heterodimer.

The protein resides in the nucleus. Its subcellular location is the cytoplasm. It catalyses the reaction S-ubiquitinyl-[E2 ubiquitin-conjugating enzyme]-L-cysteine + [acceptor protein]-L-lysine = [E2 ubiquitin-conjugating enzyme]-L-cysteine + N(6)-ubiquitinyl-[acceptor protein]-L-lysine.. It functions in the pathway protein modification; protein ubiquitination. E3 ubiquitin-protein ligase. The BRCA1-BARD1 heterodimer specifically mediates the formation of 'Lys-6'-linked polyubiquitin chains and coordinates a diverse range of cellular pathways such as DNA damage repair, ubiquitination and transcriptional regulation to maintain genomic stability. Plays a central role in the control of the cell cycle in response to DNA damage. Acts by mediating ubiquitin E3 ligase activity that is required for its tumor suppressor function. Also forms a heterodimer with CSTF1/CSTF-50 to modulate mRNA processing and RNAP II stability by inhibiting pre-mRNA 3' cleavage. The protein is BRCA1-associated RING domain protein 1 (Bard1) of Mus musculus (Mouse).